Here is a 620-residue protein sequence, read N- to C-terminus: Probable potassium transport system protein Kup (620 aa).

12 helical membrane passes run 7–27 (LALA…LYAI), 44–64 (VFGV…LKYL), 98–118 (FFLI…GMIT), 135–155 (PAFH…LFLF), 166–186 (LFGP…LVEI), 201–221 (GIMF…AVFL), 245–265 (WAFL…ALLL), 278–298 (LVPS…TIIA), 335–355 (IYVP…VIGF), 361–381 (LAAA…ILFY), 394–414 (VLNV…GASA), and 417–437 (LFHG…VMMT).

It belongs to the HAK/KUP transporter (TC 2.A.72) family.

It localises to the cell inner membrane. The catalysed reaction is K(+)(in) + H(+)(in) = K(+)(out) + H(+)(out). In terms of biological role, transport of potassium into the cell. Likely operates as a K(+):H(+) symporter. The protein is Probable potassium transport system protein Kup of Chlorobium chlorochromatii (strain CaD3).